A 188-amino-acid polypeptide reads, in one-letter code: uncharacterized protein (188 aa).

Residues 1 to 15 (MVSSKDKIKEELKQE) show a composition bias toward basic and acidic residues. Residues 1-21 (MVSSKDKIKEELKQEEPEENV) form a disordered region.

This is an uncharacterized protein from Saccharolobus islandicus (Sulfolobus islandicus).